A 432-amino-acid polypeptide reads, in one-letter code: ATP-dependent RNA helicase SUB2 (432 aa).

Acidic residues predominate over residues 1–17 (MSAEGQEELLDYSDSEE). The interval 1–35 (MSAEGQEELLDYSDSEEIAVPSNAPEAGADGADKD) is disordered. Positions 48–76 (TGFRDFLLKPELLRAIGDCGFEHPSEVQQ) match the Q motif motif. Residues 79–254 (IPQSILGTDV…KKFMQNPLEI (176 aa)) enclose the Helicase ATP-binding domain. 92 to 99 (AKSGLGKT) lines the ATP pocket. Positions 201 to 204 (DECD) match the DEAD box motif. In terms of domain architecture, Helicase C-terminal spans 266-427 (GLQQYYLKLD…EFPEEGVDSS (162 aa)).

This sequence belongs to the DEAD box helicase family. DECD subfamily.

It is found in the nucleus. The enzyme catalyses ATP + H2O = ADP + phosphate + H(+). Its function is as follows. ATP-binding RNA helicase involved in transcription elongation and required for the export of mRNA out of the nucleus. SUB2 also plays a role in pre-mRNA splicing and spliceosome assembly. May be involved in rDNA and telomeric silencing, and maintenance of genome integrity. The protein is ATP-dependent RNA helicase SUB2 (SUB2) of Meyerozyma guilliermondii (strain ATCC 6260 / CBS 566 / DSM 6381 / JCM 1539 / NBRC 10279 / NRRL Y-324) (Yeast).